The chain runs to 410 residues: Bifunctional enzyme IspD/IspF (410 aa).

The interval 1-257 (MSHDPVVPSA…AGAGSASSRL (257 aa)) is 2-C-methyl-D-erythritol 4-phosphate cytidylyltransferase. The tract at residues 258 to 410 (RSGIGTDVHA…AVATALVERL (153 aa)) is 2-C-methyl-D-erythritol 2,4-cyclodiphosphate synthase. 2 residues coordinate a divalent metal cation: D264 and H266. 4-CDP-2-C-methyl-D-erythritol 2-phosphate is bound by residues 264–266 (DVH) and 290–291 (HS). H298 serves as a coordination point for a divalent metal cation. 4-CDP-2-C-methyl-D-erythritol 2-phosphate is bound by residues 312–314 (DIG), 385–388 (TTTD), F392, and R395.

The protein in the N-terminal section; belongs to the IspD/TarI cytidylyltransferase family. IspD subfamily. This sequence in the C-terminal section; belongs to the IspF family. Requires a divalent metal cation as cofactor.

The enzyme catalyses 2-C-methyl-D-erythritol 4-phosphate + CTP + H(+) = 4-CDP-2-C-methyl-D-erythritol + diphosphate. It carries out the reaction 4-CDP-2-C-methyl-D-erythritol 2-phosphate = 2-C-methyl-D-erythritol 2,4-cyclic diphosphate + CMP. It functions in the pathway isoprenoid biosynthesis; isopentenyl diphosphate biosynthesis via DXP pathway; isopentenyl diphosphate from 1-deoxy-D-xylulose 5-phosphate: step 2/6. It participates in isoprenoid biosynthesis; isopentenyl diphosphate biosynthesis via DXP pathway; isopentenyl diphosphate from 1-deoxy-D-xylulose 5-phosphate: step 4/6. Functionally, bifunctional enzyme that catalyzes the formation of 4-diphosphocytidyl-2-C-methyl-D-erythritol from CTP and 2-C-methyl-D-erythritol 4-phosphate (MEP) (IspD), and catalyzes the conversion of 4-diphosphocytidyl-2-C-methyl-D-erythritol 2-phosphate (CDP-ME2P) to 2-C-methyl-D-erythritol 2,4-cyclodiphosphate (ME-CPP) with a corresponding release of cytidine 5-monophosphate (CMP) (IspF). The sequence is that of Bifunctional enzyme IspD/IspF from Clavibacter michiganensis subsp. michiganensis (strain NCPPB 382).